The primary structure comprises 555 residues: Putative ankyrin repeat protein L283 (555 aa).

4 ANK repeats span residues 364–389, 390–420, 422–447, and 455–488; these read TKVN…EDDI, VFKK…DINE, IKLA…KVRC, and GYLE…EGGK.

The protein is Putative ankyrin repeat protein L283 of Acanthamoeba polyphaga mimivirus (APMV).